Reading from the N-terminus, the 824-residue chain is MKVSVSWLKDLVEFNNDIDELSEKLSMTGFEVESLEDLSEQAKNVVIGFVEEITPHPNAEKLKVCSVDVGLPKKLSIVCGAPNVKAGFHVLVAKVGAYLSSKSLKIKLSNLRGVESEGMICSLEELGIESSNEGIEILEENEANIPPIGSNAVDYLCLNDTIIELAITANRPDGMSMVGIAREISTITNSKLTLPNLNYIEDFNIFEPKICDKETIGVDCIYSITYIDSIDNTGKTNKNIFNKLSSLKQNCINPVVDITNYLMLEQGQPLHAFDADLLDNIIGRKVKPNDFGIRNGKQGELFVALDKKEYKINPTIKLITCDDIPIAIAGVIGGNNSSVSDKTTRIWLEAAVFTPTSIRNSSREIGLRTDASSRYEKGISSNMTTAVSKRASELISVQLGGDNISSYVNTDFKKKSISVNLRMDKINSVLGKLSSSDSNFVNNNSTKLRYLNEDEIETLLSKLGLILTSNDSGWNVQVPPYRSSDLTREIDLIEEIARLIGYDNFDSNMPDPLEPGVLSPTKLVERRLRNSFIHNGFQEVVTSSLVGPENTDDNAVLIKNPLLSETSRLRTNVWDEHLKILQRNVSFGAEGCWIFEIAKTYKKDKECFVETNLLSGALTGSKRLSKWGGASKQLSLDYFEARGKLKQSLDVLGVETIDKQLAEKDFMHPGRTSELFVEGKSIGFFGQIHPSQSEKFDLIKETYLFNLDFDSLIKAATRKTNWTRIYKDYPTVPYMERDIALIHSKKYSSLEIMGLIKKTGRPLLEKVELIDRYEGSSMPEDEISQAFRIRYRDAKKTLVEKDINPIHEKIRNALKEKIKAELRS.

The region spanning 39 to 153 (SEQAKNVVIG…NIPPIGSNAV (115 aa)) is the tRNA-binding domain. The region spanning 414-507 (KKSISVNLRM…RLIGYDNFDS (94 aa)) is the B5 domain. 4 residues coordinate Mg(2+): aspartate 485, aspartate 491, glutamate 494, and glutamate 495. In terms of domain architecture, FDX-ACB spans 730–823 (PTVPYMERDI…LKEKIKAELR (94 aa)).

The protein belongs to the phenylalanyl-tRNA synthetase beta subunit family. Type 1 subfamily. As to quaternary structure, tetramer of two alpha and two beta subunits. The cofactor is Mg(2+).

The protein localises to the cytoplasm. It carries out the reaction tRNA(Phe) + L-phenylalanine + ATP = L-phenylalanyl-tRNA(Phe) + AMP + diphosphate + H(+). This chain is Phenylalanine--tRNA ligase beta subunit, found in Prochlorococcus marinus (strain NATL2A).